The sequence spans 267 residues: Putative phosphatase bbp_030 (267 aa).

D8 functions as the Nucleophile in the catalytic mechanism. D8 contributes to the Mg(2+) binding site. L9 is a phosphate binding site. D10 serves as a coordination point for Mg(2+). Phosphate-binding positions include 42-43 (TG) and K191. Residue D214 coordinates Mg(2+). N217 is a phosphate binding site.

It belongs to the HAD-like hydrolase superfamily. Cof family. The cofactor is Mg(2+).

This Buchnera aphidicola subsp. Baizongia pistaciae (strain Bp) protein is Putative phosphatase bbp_030.